We begin with the raw amino-acid sequence, 280 residues long: 2-dehydro-3-deoxyphosphooctonate aldolase (280 aa).

The protein belongs to the KdsA family.

The protein resides in the cytoplasm. The enzyme catalyses D-arabinose 5-phosphate + phosphoenolpyruvate + H2O = 3-deoxy-alpha-D-manno-2-octulosonate-8-phosphate + phosphate. Its pathway is carbohydrate biosynthesis; 3-deoxy-D-manno-octulosonate biosynthesis; 3-deoxy-D-manno-octulosonate from D-ribulose 5-phosphate: step 2/3. It functions in the pathway bacterial outer membrane biogenesis; lipopolysaccharide biosynthesis. This is 2-dehydro-3-deoxyphosphooctonate aldolase from Colwellia psychrerythraea (strain 34H / ATCC BAA-681) (Vibrio psychroerythus).